Here is a 206-residue protein sequence, read N- to C-terminus: MSRYRGPKLRITRRLGALPGLTQKQSKKKGRPGQHGKSNEADNSKKTTEYGIRLEEKQKLKFNYGLTESQLYRYIKEARRRKGVTGLILLQLLEMRLDTICFTLGFAPTIASARQLVNHGHITVNDNVVSIPSFQCQINDVIGIKPKATSKNLVEGNLQTIKQVDLPTHLKFDKSKQEATVINYCDRNELLLNLDELLVIEYYSRR.

2 stretches are compositionally biased toward basic residues: residues 1 to 13 and 25 to 34; these read MSRY…RITR and QSKKKGRPGQ. The segment at 1–50 is disordered; the sequence is MSRYRGPKLRITRRLGALPGLTQKQSKKKGRPGQHGKSNEADNSKKTTEY. A compositionally biased stretch (basic and acidic residues) spans 37 to 50; sequence KSNEADNSKKTTEY. The S4 RNA-binding domain occupies 95–157; it reads MRLDTICFTL…ATSKNLVEGN (63 aa).

The protein belongs to the universal ribosomal protein uS4 family. As to quaternary structure, part of the 30S ribosomal subunit. Contacts protein S5. The interaction surface between S4 and S5 is involved in control of translational fidelity.

It is found in the plastid. Its subcellular location is the chloroplast. Its function is as follows. One of the primary rRNA binding proteins, it binds directly to 16S rRNA where it nucleates assembly of the body of the 30S subunit. With S5 and S12 plays an important role in translational accuracy. This chain is Small ribosomal subunit protein uS4c (rps4), found in Trieres chinensis (Marine centric diatom).